We begin with the raw amino-acid sequence, 528 residues long: Membrane protein insertase YidC (528 aa).

Helical transmembrane passes span 13–33 (ILLA…FFIP), 336–356 (WGWA…PLTY), 406–426 (LPIL…LNAI), 446–466 (YFIL…ITPM), and 481–501 (PVIF…YWFV).

This sequence belongs to the OXA1/ALB3/YidC family. Type 1 subfamily. Interacts with the Sec translocase complex via SecD. Specifically interacts with transmembrane segments of nascent integral membrane proteins during membrane integration.

The protein resides in the cell inner membrane. Functionally, required for the insertion and/or proper folding and/or complex formation of integral membrane proteins into the membrane. Involved in integration of membrane proteins that insert both dependently and independently of the Sec translocase complex, as well as at least some lipoproteins. Aids folding of multispanning membrane proteins. This Campylobacter jejuni subsp. jejuni serotype O:2 (strain ATCC 700819 / NCTC 11168) protein is Membrane protein insertase YidC.